A 46-amino-acid polypeptide reads, in one-letter code: KECMADGTVCYIHNHNDCCGSCLCPNGPLARPWEVLVGNCKCGPKA.

4 disulfides stabilise this stretch: Cys-3–Cys-19, Cys-10–Cys-22, Cys-18–Cys-42, and Cys-24–Cys-40. Residues 31-33 (RPW) form a keys region for toxin activity region.

The protein belongs to the neurotoxin 16 (SFI) family. Expressed by the venom gland.

Its subcellular location is the secreted. Its function is as follows. Insecticidal toxin. It inhibits insect voltage-gated sodium channels (Nav) by partially blocking the channel pore in DUM neurons from the American cockroach, not by acting as a gating modifier. The inhibition is only partially reversible after prolonged washout. In vivo, the toxin causes flaccid paralysis followed by death when injected into Heliothis virescens larvae. It also causes uncoordinated movements followed by full paralysis to sheep blowflies (Lucilia cuprina). When the toxin is fused to snowdrop lectin, it is orally active against larvae of the tomato moth (Laconobia oleracea), the rice brown planthopper (Nilaparvata lugens), and the peach-potato aphid (Myzus persicae). This is Mu-segestritoxin-Sf1g from Segestria florentina (Tube-web spider).